A 410-amino-acid polypeptide reads, in one-letter code: Elongation factor Tu, chloroplastic (410 aa).

A tr-type G domain is found at 10-215 (KPHVNIGTIG…IVDEYIPTPQ (206 aa)). Residues 19 to 26 (GHVDHGKT) are G1. 19–26 (GHVDHGKT) provides a ligand contact to GTP. Thr-26 provides a ligand contact to Mg(2+). Residues 61-65 (GITIN) form a G2 region. A G3 region spans residues 82–85 (DCPG). Residues 82-86 (DCPGH) and 137-140 (NKAD) each bind GTP. The segment at 137 to 140 (NKAD) is G4. The interval 175-177 (SAL) is G5.

The protein belongs to the TRAFAC class translation factor GTPase superfamily. Classic translation factor GTPase family. EF-Tu/EF-1A subfamily.

It is found in the plastid. It localises to the chloroplast. It catalyses the reaction GTP + H2O = GDP + phosphate + H(+). Its function is as follows. GTP hydrolase that promotes the GTP-dependent binding of aminoacyl-tRNA to the A-site of ribosomes during protein biosynthesis. The polypeptide is Elongation factor Tu, chloroplastic (tufA) (Cyanidioschyzon merolae (strain NIES-3377 / 10D) (Unicellular red alga)).